The following is an 873-amino-acid chain: DNA mismatch repair protein MutS (873 aa).

625–632 (GPNMGGKS) provides a ligand contact to ATP.

This sequence belongs to the DNA mismatch repair MutS family.

Functionally, this protein is involved in the repair of mismatches in DNA. It is possible that it carries out the mismatch recognition step. This protein has a weak ATPase activity. The protein is DNA mismatch repair protein MutS of Xanthomonas oryzae pv. oryzae (strain KACC10331 / KXO85).